We begin with the raw amino-acid sequence, 440 residues long: Chromosome partition protein MukF (440 aa).

A leucine-zipper region spans residues 208–236 (LSETSGTLRELQDTLEAAGDKLQANLLRI).

It belongs to the MukF family. As to quaternary structure, interacts, and probably forms a ternary complex, with MukE and MukB via its C-terminal region. The complex formation is stimulated by calcium or magnesium. It is required for an interaction between MukE and MukB.

It localises to the cytoplasm. The protein localises to the nucleoid. Functionally, involved in chromosome condensation, segregation and cell cycle progression. May participate in facilitating chromosome segregation by condensation DNA from both sides of a centrally located replisome during cell division. Not required for mini-F plasmid partitioning. Probably acts via its interaction with MukB and MukE. Overexpression results in anucleate cells. It has a calcium binding activity. The protein is Chromosome partition protein MukF of Escherichia coli O127:H6 (strain E2348/69 / EPEC).